The chain runs to 2381 residues: Highly reducing polyketide synthase virA (2381 aa).

The 420-residue stretch at 1–420 folds into the Ketosynthase family 3 (KS3) domain; the sequence is MDALHLACHL…GANGHVILES (420 aa). Active-site for beta-ketoacyl synthase activity residues include C171, H306, and H344. A malonyl-CoA:ACP transacylase (MAT) domain region spans residues 535 to 851; that stretch reads VFTGQGAQYA…PYSPTLVRKE (317 aa). Residue S629 is the For malonyltransferase activity of the active site. Positions 920–1064 are N-terminal hotdog fold; it reads HELLGTRATA…GSIRVMESTL (145 aa). Positions 920–1232 are dehydratase (DH) domain; the sequence is HELLGTRATA…HLRMNEYTGK (313 aa). The PKS/mFAS DH domain maps to 920-1235; it reads HELLGTRATA…MNEYTGKAPV (316 aa). H952 serves as the catalytic Proton acceptor; for dehydratase activity. Residues 1078-1235 form a C-terminal hotdog fold region; sequence HEVWGMSRWY…MNEYTGKAPV (158 aa). D1144 acts as the Proton donor; for dehydratase activity in catalysis. An enoyl reductase (ER) domain region spans residues 1639–1956; that stretch reads GMTDTIHFQQ…NKDRVGKVVV (318 aa). Positions 1981 to 2159 are ketoreductase (KR) domain; it reads TYLLVGCLGG…AVSVGLGMIS (179 aa). Residues 2297-2375 enclose the Carrier domain; it reads TMLDAILRLT…TLAEFIEEKL (79 aa). S2334 is subject to O-(pantetheine 4'-phosphoryl)serine.

Its pathway is secondary metabolite biosynthesis. In terms of biological role, highly reducing polyketide synthase; part of the gene cluster that mediates the biosynthesis of virensols and trichoxide, fungal natural products that contain or are derived from a salicylaldehyde core. The pathway begins with the synthesis of the reduced chain in virensol C by the highly reducing polyketide synthase virA via condensation of one acetate and 8 malonate units. VirA has interesting programming rules since the first 2 ketides are fully reduced, the 3 following ketides undergo beta-dehydration, and the last 3 ketides are only reduced to beta-hydroxys to yield the trihydroxy portion. The production of aldehyde virensol C by virA alone is surprising, since virA does not contain a reductase (R) domain that is typically associated with reductive product release in HRPKS. The cupin-domain enzyme virC is involved in enhancing virA product turnover. The short-chain dehydrogenase virB then oxidizes the C-7 alcohol of virensol C to a ketone, yielding virensol D. Virensol D is further transformed to salicylaldehyde 5-deoxyaurocitrin by the short-chain dehydrogenase virD. VirD catalyzes the dehydrogenation of C-3 to form the beta-ketone aldehyde, which is followed by the generation of the nucleophilic C-2 that is required for the intramolecular aldol condensation between C-2 and C-7, itself followed by dehydration and aromatization which leads to salicylaldehyde 5-deoxyaurocitrin. While the dehydrogenation of virensol D is definitely catalyzed by virD, the aldol condensation and dehydration may be uncatalyzed or assisted by virD. The short chain dehydrogenase virG then converts salicylaldehyde 5-deoxyaurocitrin into virensol B which is further hydroxylated by the cytochrome P450 monooxygenase virE to yield the hydroquinone virensol A. VirI then may oxidize virensol A to form the quinone, while virH performs the epoxidation. Finally, the two remaining short-chain dehydrogenases, virK and virL, are probably responsible for reducing the ketones to the corresponding alcohols to furnish the epoxycyclohexanol structure in trichoxide. This is Highly reducing polyketide synthase virA from Hypocrea virens (strain Gv29-8 / FGSC 10586) (Gliocladium virens).